A 457-amino-acid chain; its full sequence is MKLHLYNTLTRTKEVFNPQDPANIKMYVCGPTVYDNPHIGNSRSVVVYDLLYRIIIKIFGKKAVKYVRNITDVDDKIIDRAELLGITINDLTDKVTREFHINMEYLGCMLPTIEPKATEHIDVMIEIIERLIAKDHAYIADNHVYFDVLSAPNYTELSNRNLEAMFEGVRIENSKTKKNPQDFVLWKPAKKNEPENINFTSPWGLGRPGWHIECSAMSYKYLGQNFDIHGGGADLIFPHHTNEIAQSRCAFPSSTYAKYWIHNGFLTVNGSKMSKSLGNFITVRDLMDKQIQGEVVRLFLLSSHYRRPLDYNDKAIDDAKKTLDYWYRAIEHINVQKVDLPSNFMRSLFDDMNTPLAIKIINDYAKCVFISKTEAERKFNASAIITCANFIGLMRKTQYEWFNRDVDEFYINELINKRLKAKKQKNWLLADKIRNQLLEKKIILEDKSNYITIWRKE.

C29 contacts Zn(2+). The 'HIGH' region signature appears at 31–41; the sequence is PTVYDNPHIGN. Positions 214, 239, and 243 each coordinate Zn(2+). A 'KMSKS' region motif is present at residues 272–276; sequence KMSKS. K275 provides a ligand contact to ATP.

This sequence belongs to the class-I aminoacyl-tRNA synthetase family. In terms of assembly, monomer. It depends on Zn(2+) as a cofactor.

It is found in the cytoplasm. It catalyses the reaction tRNA(Cys) + L-cysteine + ATP = L-cysteinyl-tRNA(Cys) + AMP + diphosphate. The sequence is that of Cysteine--tRNA ligase (cysS) from Rickettsia prowazekii (strain Madrid E).